The chain runs to 421 residues: Mitochondrial distribution and morphology protein 10 (421 aa).

It belongs to the MDM10 family. In terms of assembly, component of the ER-mitochondria encounter structure (ERMES) or MDM complex, composed of MMM1, MDM10, MDM12 and MDM34. Associates with the mitochondrial outer membrane sorting assembly machinery SAM(core) complex.

It localises to the mitochondrion outer membrane. Its function is as follows. Component of the ERMES/MDM complex, which serves as a molecular tether to connect the endoplasmic reticulum and mitochondria. Components of this complex are involved in the control of mitochondrial shape and protein biogenesis and may function in phospholipid exchange. MDM10 is involved in the late assembly steps of the general translocase of the mitochondrial outer membrane (TOM complex). Functions in the TOM40-specific route of the assembly of outer membrane beta-barrel proteins, including the association of TOM40 with the receptor TOM22 and small TOM proteins. Can associate with the SAM(core) complex as well as the MDM12-MMM1 complex, both involved in late steps of the major beta-barrel assembly pathway, that is responsible for biogenesis of all outer membrane beta-barrel proteins. May act as a switch that shuttles between both complexes and channels precursor proteins into the TOM40-specific pathway. Plays a role in mitochondrial morphology and in the inheritance of mitochondria. This is Mitochondrial distribution and morphology protein 10 from Vanderwaltozyma polyspora (strain ATCC 22028 / DSM 70294 / BCRC 21397 / CBS 2163 / NBRC 10782 / NRRL Y-8283 / UCD 57-17) (Kluyveromyces polysporus).